The sequence spans 797 residues: G-type lectin S-receptor-like serine/threonine-protein kinase SD2-2 (797 aa).

An N-terminal signal peptide occupies residues 1-23; that stretch reads MPCTTYLPLLLLLFLLPPPSVQS. The 116-residue stretch at 24 to 139 folds into the Bulb-type lectin domain; sequence KVIIKGNQTI…DGSPVWQSFD (116 aa). Topologically, residues 24–401 are extracellular; that stretch reads KVIIKGNQTI…KNSKGNISKS (378 aa). N-linked (GlcNAc...) asparagine glycosylation is found at N30, N49, N150, and N197. Residues 274-310 form the EGF-like; atypical domain; sequence PEDPCRVYNLCGQLGFCSSELLKPCACIRGFRPRNDA. Intrachain disulfides connect C278–C290, C284–C298, C359–C381, and C363–C369. The PAN domain occupies 321–407; the sequence is CRRENGDSGE…ISKSIIILCS (87 aa). N-linked (GlcNAc...) asparagine glycans are attached at residues N366 and N397. A helical membrane pass occupies residues 402 to 422; the sequence is IIILCSVVGSISVLGFTLLVP. Residues 423–797 lie on the Cytoplasmic side of the membrane; the sequence is LILLKRSRKR…SRSSFGRPSP (375 aa). The Protein kinase domain maps to 461–742; it reads NGFSDKVGHG…TVVKMLEGVV (282 aa). ATP-binding positions include 467-475 and K490; that span reads VGHGGFGAV. Positions 550-566 are caM-binding; that stretch reads SPKLLSWETRFRIALGT. D585 functions as the Proton acceptor in the catalytic mechanism. The segment at 767-797 is disordered; sequence GTSCSEGHGCSDLNTGLSSPGSRSSFGRPSP. Residues 784 to 797 are compositionally biased toward low complexity; sequence SSPGSRSSFGRPSP.

The protein belongs to the protein kinase superfamily. Ser/Thr protein kinase family. Autophosphorylated. In terms of tissue distribution, expressed in the shoot apex and roots, specifically in lateral roots and at the root-hypocotyl transition zone.

The protein localises to the cell membrane. It catalyses the reaction L-seryl-[protein] + ATP = O-phospho-L-seryl-[protein] + ADP + H(+). The catalysed reaction is L-threonyl-[protein] + ATP = O-phospho-L-threonyl-[protein] + ADP + H(+). Functionally, serine/threonine-protein kinase. In Arabidopsis thaliana (Mouse-ear cress), this protein is G-type lectin S-receptor-like serine/threonine-protein kinase SD2-2 (SD22).